The chain runs to 713 residues: Cadherin-13 (713 aa).

The first 22 residues, 1 to 22, serve as a signal peptide directing secretion; the sequence is MQPRTPLVLCVLLSQVLLLTSA. The propeptide occupies 23–138; sequence EDLDCIPGFQ…RTSPVPRQKR (116 aa). N-linked (GlcNAc...) asparagine glycans are attached at residues Asn52 and Asn86. 5 Cadherin domains span residues 139 to 245, 246 to 363, 364 to 477, 478 to 585, and 584 to 690; these read SIVV…RPIF, REGP…SPKF, TKKE…GPVF, YPDP…APFI, and FIYP…VDSN. N-linked (GlcNAc...) asparagine glycans are attached at residues Asn382, Asn489, Asn500, Asn530, Asn598, Asn638, and Asn671. A lipid anchor (GPI-anchor amidated asparagine) is attached at Asn690. Positions 691-713 are cleaved as a propeptide — removed in mature form; the sequence is AVGALRFSLPSLLLLSLFSLACL.

As to quaternary structure, by contrast to classical cadherins, homodimerization in trans is not mediated by cadherin EC1 domain strand-swapping, but instead through a homophilic adhesive interface which joins two elongated EC1-EC2 domains through a region near their Ca2+-binding sites to form a tetrahedral, X-like shape.

Its subcellular location is the cell membrane. The protein localises to the cytoplasm. Cadherins are calcium-dependent cell adhesion proteins. They preferentially interact with themselves in a homophilic manner in connecting cells; cadherins may thus contribute to the sorting of heterogeneous cell types. May act as a negative regulator of neural cell growth. This is Cadherin-13 (CDH13) from Pongo abelii (Sumatran orangutan).